Consider the following 96-residue polypeptide: Putative pterin-4-alpha-carbinolamine dehydratase (96 aa).

It belongs to the pterin-4-alpha-carbinolamine dehydratase family.

The catalysed reaction is (4aS,6R)-4a-hydroxy-L-erythro-5,6,7,8-tetrahydrobiopterin = (6R)-L-erythro-6,7-dihydrobiopterin + H2O. The chain is Putative pterin-4-alpha-carbinolamine dehydratase from Herpetosiphon aurantiacus (strain ATCC 23779 / DSM 785 / 114-95).